A 201-amino-acid chain; its full sequence is Small ribosomal subunit protein uS4c (201 aa).

The region spanning 89–149 is the S4 RNA-binding domain; sequence MRLDNILFRL…DKPKSGALIK (61 aa).

Belongs to the universal ribosomal protein uS4 family. As to quaternary structure, part of the 30S ribosomal subunit. Contacts protein S5. The interaction surface between S4 and S5 is involved in control of translational fidelity.

It localises to the plastid. One of the primary rRNA binding proteins, it binds directly to 16S rRNA where it nucleates assembly of the body of the 30S subunit. In terms of biological role, with S5 and S12 plays an important role in translational accuracy. This Cuscuta reflexa (Southern Asian dodder) protein is Small ribosomal subunit protein uS4c (rps4).